Here is a 1403-residue protein sequence, read N- to C-terminus: DNA-directed RNA polymerase subunit beta' (1403 aa).

Positions 70, 72, 85, and 88 each coordinate Zn(2+). Mg(2+) is bound by residues Asp-460, Asp-462, and Asp-464. Cys-814, Cys-888, Cys-895, and Cys-898 together coordinate Zn(2+). The interval 1369–1403 (RRKRRMLEQPESLTADTGTSHYGEDEISESGAATA) is disordered. Polar residues predominate over residues 1379–1388 (ESLTADTGTS).

The protein belongs to the RNA polymerase beta' chain family. In terms of assembly, the RNAP catalytic core consists of 2 alpha, 1 beta, 1 beta' and 1 omega subunit. When a sigma factor is associated with the core the holoenzyme is formed, which can initiate transcription. Mg(2+) is required as a cofactor. Zn(2+) serves as cofactor.

The enzyme catalyses RNA(n) + a ribonucleoside 5'-triphosphate = RNA(n+1) + diphosphate. Its function is as follows. DNA-dependent RNA polymerase catalyzes the transcription of DNA into RNA using the four ribonucleoside triphosphates as substrates. In Nitrosococcus oceani (strain ATCC 19707 / BCRC 17464 / JCM 30415 / NCIMB 11848 / C-107), this protein is DNA-directed RNA polymerase subunit beta'.